Consider the following 295-residue polypeptide: 4-diphosphocytidyl-2-C-methyl-D-erythritol kinase (295 aa).

K22 is a catalytic residue. P106 to S116 provides a ligand contact to ATP. Residue D148 is part of the active site.

It belongs to the GHMP kinase family. IspE subfamily.

It carries out the reaction 4-CDP-2-C-methyl-D-erythritol + ATP = 4-CDP-2-C-methyl-D-erythritol 2-phosphate + ADP + H(+). It functions in the pathway isoprenoid biosynthesis; isopentenyl diphosphate biosynthesis via DXP pathway; isopentenyl diphosphate from 1-deoxy-D-xylulose 5-phosphate: step 3/6. Its function is as follows. Catalyzes the phosphorylation of the position 2 hydroxy group of 4-diphosphocytidyl-2C-methyl-D-erythritol. The polypeptide is 4-diphosphocytidyl-2-C-methyl-D-erythritol kinase (Xanthomonas euvesicatoria pv. vesicatoria (strain 85-10) (Xanthomonas campestris pv. vesicatoria)).